A 60-amino-acid polypeptide reads, in one-letter code: Large ribosomal subunit protein bL32 (60 aa).

The tract at residues 1 to 60 (MAVQQNKKSPSKRGMHRSHDALTNPPLAIEPTTGETHLRHHISPNGFYRGKKVIKTKNDD) is disordered. The span at 49–60 (RGKKVIKTKNDD) shows a compositional bias: basic residues.

Belongs to the bacterial ribosomal protein bL32 family.

This Nitrosomonas eutropha (strain DSM 101675 / C91 / Nm57) protein is Large ribosomal subunit protein bL32.